Consider the following 502-residue polypeptide: MSGCCCSRKCPSLPAISLCSTEVSCGGPVCLPSSCRSQTWQLVTCEDSCGSSGCGSQCCQPSCSVSSCCQPVCCEATICEPSCSVSSCAQPVCCEATICEPSCSMGSCCQPVCCEATICEPSCSVSTCAQPVCCEATMCQPSCSVSSCQPVCCETSSCQPVLCLPATCQPVICKPCCCQPVICEPSCCSAVCAVPASCQPMICEPVVCEPACCQPVCPTPSCCPSVCSAASSCQPVGCETSPCEPPCSEASACQPSACMALVCEPVCLRPVCCVQGPCEPPCVSSSCQDSSCCVSSICQPVCPEPSPCLPSVCVPTPCQPSCYIVKRCRSVSCEPISCPSPSCQPACCRPGSSASAICQPACPPRTFYIPSSCKPPCSPVSCRPICRPICSGPITFRQPYVTSITYRPACYRSCYSILRRPTCLASYSYRPVCSRQPCTDSDNDKCDSKKPTSSQPDCADSTPVKTEVSDETPCQPSEIKPASPITREAAAPQPAASKPADR.

A run of 15 repeats spans residues 4-8 (CCCSR), 58-62 (CCQPS), 73-77 (CCEAT), 93-97 (CCEAT), 108-112 (CCQPV), 113-117 (CCEAT), 133-137 (CCEAT), 152-156 (CCETS), 177-181 (CCQPV), 187-191 (CCSAV), 212-216 (CCQPV), 222-226 (CCPSV), 272-276 (CCVQG), 292-296 (CCVSS), and 347-351 (CCRPG). Positions 73 to 307 (CCEATICEPS…CQPVCPEPSP (235 aa)) are 15 X 5 AA repeats of C-C-X(3). Residues 435-502 (RQPCTDSDND…QPAASKPADR (68 aa)) form a disordered region. A compositionally biased stretch (low complexity) spans 489–502 (AAAPQPAASKPADR).

This sequence belongs to the KRTAP type 16 family. As to quaternary structure, interacts with hair keratins.

In the hair cortex, hair keratin intermediate filaments are embedded in an interfilamentous matrix, consisting of hair keratin-associated proteins (KRTAP), which are essential for the formation of a rigid and resistant hair shaft through their extensive disulfide bond cross-linking with abundant cysteine residues of hair keratins. The matrix proteins include the high-sulfur and high-glycine-tyrosine keratins. The protein is Keratin-associated protein 16-1 (Krtap16-1) of Mus musculus (Mouse).